The primary structure comprises 356 residues: UDP-N-acetylglucosamine--N-acetylmuramyl-(pentapeptide) pyrophosphoryl-undecaprenol N-acetylglucosamine transferase (356 aa).

UDP-N-acetyl-alpha-D-glucosamine-binding positions include 11-13 (TGG), asparagine 122, serine 186, and glutamine 287.

It belongs to the glycosyltransferase 28 family. MurG subfamily.

The protein localises to the cell inner membrane. The enzyme catalyses di-trans,octa-cis-undecaprenyl diphospho-N-acetyl-alpha-D-muramoyl-L-alanyl-D-glutamyl-meso-2,6-diaminopimeloyl-D-alanyl-D-alanine + UDP-N-acetyl-alpha-D-glucosamine = di-trans,octa-cis-undecaprenyl diphospho-[N-acetyl-alpha-D-glucosaminyl-(1-&gt;4)]-N-acetyl-alpha-D-muramoyl-L-alanyl-D-glutamyl-meso-2,6-diaminopimeloyl-D-alanyl-D-alanine + UDP + H(+). The protein operates within cell wall biogenesis; peptidoglycan biosynthesis. In terms of biological role, cell wall formation. Catalyzes the transfer of a GlcNAc subunit on undecaprenyl-pyrophosphoryl-MurNAc-pentapeptide (lipid intermediate I) to form undecaprenyl-pyrophosphoryl-MurNAc-(pentapeptide)GlcNAc (lipid intermediate II). The sequence is that of UDP-N-acetylglucosamine--N-acetylmuramyl-(pentapeptide) pyrophosphoryl-undecaprenol N-acetylglucosamine transferase from Anaplasma marginale (strain St. Maries).